A 413-amino-acid polypeptide reads, in one-letter code: Serine hydroxymethyltransferase (413 aa).

(6S)-5,6,7,8-tetrahydrofolate contacts are provided by residues leucine 117 and 121–123 (GHL). Lysine 226 is modified (N6-(pyridoxal phosphate)lysine). Residues glutamate 241 and 349–351 (SPF) contribute to the (6S)-5,6,7,8-tetrahydrofolate site.

This sequence belongs to the SHMT family. In terms of assembly, homodimer. It depends on pyridoxal 5'-phosphate as a cofactor.

The protein localises to the cytoplasm. It catalyses the reaction (6R)-5,10-methylene-5,6,7,8-tetrahydrofolate + glycine + H2O = (6S)-5,6,7,8-tetrahydrofolate + L-serine. It participates in one-carbon metabolism; tetrahydrofolate interconversion. The protein operates within amino-acid biosynthesis; glycine biosynthesis; glycine from L-serine: step 1/1. Functionally, catalyzes the reversible interconversion of serine and glycine with tetrahydrofolate (THF) serving as the one-carbon carrier. This reaction serves as the major source of one-carbon groups required for the biosynthesis of purines, thymidylate, methionine, and other important biomolecules. Also exhibits THF-independent aldolase activity toward beta-hydroxyamino acids, producing glycine and aldehydes, via a retro-aldol mechanism. The chain is Serine hydroxymethyltransferase from Halalkalibacterium halodurans (strain ATCC BAA-125 / DSM 18197 / FERM 7344 / JCM 9153 / C-125) (Bacillus halodurans).